The primary structure comprises 63 residues: Large ribosomal subunit protein bL35 (63 aa).

The segment covering 1 to 15 (MPKIKTHRGAAKRFK) has biased composition (basic residues). The segment at 1-26 (MPKIKTHRGAAKRFKQTAGGKWKGSH) is disordered.

This sequence belongs to the bacterial ribosomal protein bL35 family.

The chain is Large ribosomal subunit protein bL35 from Pelotomaculum thermopropionicum (strain DSM 13744 / JCM 10971 / SI).